The sequence spans 729 residues: Translation initiation factor IF-2 (729 aa).

Residues 20-141 (QFAGGGRGPG…TTTVRAPVRP (122 aa)) form a disordered region. Gly residues predominate over residues 22–91 (AGGGRGPGNP…PGGGRGGGRG (70 aa)). Over residues 92–108 (GDGRRRDESFVENEGGR) the composition is skewed to basic and acidic residues. Residues 112 to 127 (SGRTTSTATTARTPGG) show a composition bias toward low complexity. Positions 229–396 (PRPPVVTIMG…IILLVADLNE (168 aa)) constitute a tr-type G domain. The tract at residues 238 to 245 (GHVDHGKT) is G1. Residue 238–245 (GHVDHGKT) coordinates GTP. A G2 region spans residues 263-267 (GITQH). Positions 284–287 (DTPG) are G3. Residues 284-288 (DTPGH) and 338-341 (NKID) each bind GTP. The interval 338-341 (NKID) is G4. Residues 374-376 (SAK) are G5.

This sequence belongs to the TRAFAC class translation factor GTPase superfamily. Classic translation factor GTPase family. IF-2 subfamily.

The protein resides in the cytoplasm. One of the essential components for the initiation of protein synthesis. Protects formylmethionyl-tRNA from spontaneous hydrolysis and promotes its binding to the 30S ribosomal subunits. Also involved in the hydrolysis of GTP during the formation of the 70S ribosomal complex. This Roseiflexus sp. (strain RS-1) protein is Translation initiation factor IF-2.